The chain runs to 245 residues: Nodulation protein G (245 aa).

11–35 (VTGASGAIGGAIARVLHAQGAIVGL) provides a ligand contact to NAD(+). Position 139 (Ser-139) interacts with substrate. Tyr-152 (proton acceptor) is an active-site residue.

Belongs to the short-chain dehydrogenases/reductases (SDR) family.

In terms of biological role, proposed to modify Nod factor fatty acyl chain. This is Nodulation protein G (nodG) from Rhizobium meliloti (strain 1021) (Ensifer meliloti).